A 203-amino-acid chain; its full sequence is Cilia- and flagella-associated protein 20 (203 aa).

This sequence belongs to the CFAP20 family.

Its subcellular location is the nucleus. It is found in the cytoplasm. The protein resides in the cytoskeleton. The protein localises to the microtubule organizing center. It localises to the centrosome. Its subcellular location is the centriole. It is found in the cilium basal body. The protein resides in the cilium axoneme. Cilium- and flagellum-specific protein that plays a role in axonemal structure organization and motility. Microtubule inner protein (MIP) part of the dynein-decorated doublet microtubules (DMTs) in cilia axoneme, which is required for motile cilia beating. Involved in the regulation of the size and morphology of cilia. Required for axonemal microtubules polyglutamylation. The polypeptide is Cilia- and flagella-associated protein 20 (Caenorhabditis briggsae).